Consider the following 61-residue polypeptide: Small ribosomal subunit protein uS14 (61 aa).

Zn(2+) contacts are provided by cysteine 24, cysteine 27, cysteine 40, and cysteine 43.

It belongs to the universal ribosomal protein uS14 family. Zinc-binding uS14 subfamily. Part of the 30S ribosomal subunit. Contacts proteins S3 and S10. The cofactor is Zn(2+).

In terms of biological role, binds 16S rRNA, required for the assembly of 30S particles and may also be responsible for determining the conformation of the 16S rRNA at the A site. The sequence is that of Small ribosomal subunit protein uS14 from Moorella thermoacetica (strain ATCC 39073 / JCM 9320).